The primary structure comprises 89 residues: MALTTEEKKVVLGEYGLHETDTGSPEAQVAMLTKRITDLTEHLKTHKHDHHSRRGLLLMVGRRRRLLKYVAKTDVARYRTLIERLGLRR.

This sequence belongs to the universal ribosomal protein uS15 family. Part of the 30S ribosomal subunit. Forms a bridge to the 50S subunit in the 70S ribosome, contacting the 23S rRNA.

In terms of biological role, one of the primary rRNA binding proteins, it binds directly to 16S rRNA where it helps nucleate assembly of the platform of the 30S subunit by binding and bridging several RNA helices of the 16S rRNA. Its function is as follows. Forms an intersubunit bridge (bridge B4) with the 23S rRNA of the 50S subunit in the ribosome. In Rhodococcus erythropolis (strain PR4 / NBRC 100887), this protein is Small ribosomal subunit protein uS15.